The following is a 447-amino-acid chain: Pentatricopeptide repeat-containing protein At3g53170 (447 aa).

10 PPR repeats span residues 93–127, 128–158, 164–198, 199–233, 235–269, 270–304, 305–339, 340–374, 375–409, and 410–444; these read RCKTYTKLFKVLGNCKQPDQASLLFEVMLSEGLKP, TIDVYTSLISVYGKSELLDKAFSTLEYMKSV, DVFTFTVLISCCCKLGRFDLVKSIVLEMSYLGVGC, STVTYNTIIDGYGKAGMFEEMESVLADMIEDGDSL, DVCTLNSIIGSYGNGRNMRKMESWYSRFQLMGVQP, DITTFNILILSFGKAGMYKKMCSVMDFMEKRFFSL, TTVTYNIVIETFGKAGRIEKMDDVFRKMKYQGVKP, NSITYCSLVNAYSKAGLVVKIDSVLRQIVNSDVVL, DTPFFNCIINAYGQAGDLATMKELYIQMEERKCKP, and DKITFATMIKTYTAHGIFDAVQELEKQMISSGENL.

It belongs to the PPR family. P subfamily.

The polypeptide is Pentatricopeptide repeat-containing protein At3g53170 (Arabidopsis thaliana (Mouse-ear cress)).